A 399-amino-acid chain; its full sequence is Nicotinate phosphoribosyltransferase (399 aa).

Phosphohistidine; by autocatalysis is present on His-217.

It belongs to the NAPRTase family. Transiently phosphorylated on a His residue during the reaction cycle. Phosphorylation strongly increases the affinity for substrates and increases the rate of nicotinate D-ribonucleotide production. Dephosphorylation regenerates the low-affinity form of the enzyme, leading to product release.

The enzyme catalyses nicotinate + 5-phospho-alpha-D-ribose 1-diphosphate + ATP + H2O = nicotinate beta-D-ribonucleotide + ADP + phosphate + diphosphate. Its pathway is cofactor biosynthesis; NAD(+) biosynthesis; nicotinate D-ribonucleotide from nicotinate: step 1/1. Catalyzes the synthesis of beta-nicotinate D-ribonucleotide from nicotinate and 5-phospho-D-ribose 1-phosphate at the expense of ATP. This is Nicotinate phosphoribosyltransferase from Burkholderia orbicola (strain MC0-3).